Here is a 358-residue protein sequence, read N- to C-terminus: Trans-enoyl reductase pvhC (358 aa).

48-51 (VDSK) contacts NADP(+). Position 134 to 141 (134 to 141 (ISFLTSGL)) interacts with substrate. Residues 169–172 (SSSC), 192–195 (SPHN), Tyr-210, and 257–258 (LE) each bind NADP(+). Position 278–282 (278–282 (GPSLL)) interacts with substrate. 347-348 (VS) is a binding site for NADP(+).

This sequence belongs to the zinc-containing alcohol dehydrogenase family. Monomer.

The protein operates within secondary metabolite biosynthesis. In terms of biological role, trans-enoyl reductase; part of the gene cluster that mediates the biosynthesis of varicidin A, an antifungal natural product containing a cis-octahydrodecalin core. The PKS module of pvhA together with the enoylreductase pvhC catalyze the formation of the polyketide unit which is then conjugated to L-isoleucine by the condensation domain of the NRPS module. Activity of the Dieckmann cyclase domain (RED) of pvhA results in release of an acyclic tetramate. The cytochrome P450 monooxygenase pvhE then catalyzes the oxidation of the C21 methyl group to a to carboxylate group. The methyltransferase pvhD then further methylates the pvhE product. The Diels-Alderase pvhB is able to catalyze Diels-Alder cycloaddition using both pvhE and pvhD products as substrates to form the decalin ring, yielding varicidin B and A, respectively. This is Trans-enoyl reductase pvhC from Talaromyces variabilis (Penicillium variabile).